A 444-amino-acid polypeptide reads, in one-letter code: MDIVNLILVAVLIALTAFFVASEFAIIRIRGSRIDQLIAEGNKAAIAVKKVTTHLDEYLSACQLGITLTSIGLGVLGESTIERLLHPLFVQMNVPGSLSHVISFIFAYAIITFLHVVVGELAPKTVAIQKAEAVSMLFAKPLIWFYRIAFPFIWLLNNSARLLTKAFGLETVSENELAHSEEELRIILSESYKSGEINQSEFKYVNKIFEFDDRLAKEIMIPRTEIVSLPHDIKISEMMDIIQIEKYTRYPVEEGDKDNIIGVINIKEVLTACISGEVSVDSTISQFVNPIIHVIESAPIQDLLVKMQKERVHMAILSDEYGGTAGLVTVEDIIEEIVGEIRDEFDIDEISEIRKIGEGHYILDGKVLIDQVNDLLGIHLENEEVDTIGGWFLTQKYDVEKDDSIIEEGCEFIINEIDGHHVAYIEVKKLQEEELLETANQQEA.

The region spanning 1 to 201 is the CNNM transmembrane domain; sequence MDIVNLILVA…YKSGEINQSE (201 aa). The next 3 membrane-spanning stretches (helical) occupy residues 7–27, 61–81, and 101–121; these read ILVAVLIALTAFFVASEFAII, ACQLGITLTSIGLGVLGESTI, and VISFIFAYAIITFLHVVVGEL. 2 consecutive CBS domains span residues 220-282 and 284-344; these read MIPR…SVDS and ISQF…IRDE.

This sequence belongs to the UPF0053 family.

It is found in the cell membrane. This Bacillus subtilis (strain 168) protein is UPF0053 protein YhdP (yhdP).